The sequence spans 342 residues: Anthranilate phosphoribosyltransferase (342 aa).

5-phospho-alpha-D-ribose 1-diphosphate-binding positions include glycine 79, 82–83 (GD), threonine 87, 89–92 (NVST), 107–115 (KHGNRAATS), and serine 119. Position 79 (glycine 79) interacts with anthranilate. Position 91 (serine 91) interacts with Mg(2+). Anthranilate is bound at residue asparagine 110. Arginine 165 contacts anthranilate. 2 residues coordinate Mg(2+): aspartate 224 and glutamate 225.

It belongs to the anthranilate phosphoribosyltransferase family. In terms of assembly, homodimer. Mg(2+) serves as cofactor.

The enzyme catalyses N-(5-phospho-beta-D-ribosyl)anthranilate + diphosphate = 5-phospho-alpha-D-ribose 1-diphosphate + anthranilate. Its pathway is amino-acid biosynthesis; L-tryptophan biosynthesis; L-tryptophan from chorismate: step 2/5. Its function is as follows. Catalyzes the transfer of the phosphoribosyl group of 5-phosphorylribose-1-pyrophosphate (PRPP) to anthranilate to yield N-(5'-phosphoribosyl)-anthranilate (PRA). In Rubrobacter xylanophilus (strain DSM 9941 / JCM 11954 / NBRC 16129 / PRD-1), this protein is Anthranilate phosphoribosyltransferase.